The sequence spans 61 residues: UPF0434 protein PSEEN1604 (61 aa).

The protein belongs to the UPF0434 family.

The sequence is that of UPF0434 protein PSEEN1604 from Pseudomonas entomophila (strain L48).